We begin with the raw amino-acid sequence, 144 residues long: Large ribosomal subunit protein uL15 (144 aa).

The disordered stretch occupies residues 1–53 (MFLNTIKPGEGAKHAKRRVGRGIGSGLGKTAGRGHKGQKSRSGGFHKVGFEGG). A compositionally biased stretch (gly residues) spans 21–31 (RGIGSGLGKTA).

Belongs to the universal ribosomal protein uL15 family. As to quaternary structure, part of the 50S ribosomal subunit.

Functionally, binds to the 23S rRNA. The protein is Large ribosomal subunit protein uL15 of Laribacter hongkongensis (strain HLHK9).